Reading from the N-terminus, the 1365-residue chain is Patatin-like phospholipase domain-containing protein 6 (1365 aa).

Over 1-50 (MGTSSHGLATNSSGAKVAERDGFQDVPAPGEGAAGRICGAQPVPFVPQVL) the chain is Lumenal. Asn-11 is a glycosylation site (N-linked (GlcNAc...) asparagine). The chain crosses the membrane as a helical span at residues 51-71 (GVMIGAGVAVVVTAVLILLVV). Residues 72–1365 (RRLRVPKTPA…QEPPGSATDA (1294 aa)) lie on the Cytoplasmic side of the membrane. 186-313 (VLGHFEKPLF…VRVVQIIMVR (128 aa)) serves as a coordination point for a nucleoside 3',5'-cyclic phosphate. 2 disordered regions span residues 343-427 (FPSP…RSDF) and 441-463 (QEGA…PREQ). At Ser-345 the chain carries Phosphoserine. Residues 350-367 (TRTSPVRGSKRMVSTSAT) are compositionally biased toward polar residues. A Phosphothreonine modification is found at Thr-352. Residues Ser-353 and Ser-363 each carry the phosphoserine modification. The segment covering 375–389 (GRPPDPTGAPLPGPT) has biased composition (pro residues). Residue Ser-411 is modified to Phosphoserine. Thr-455 bears the Phosphothreonine mark. Residues 502–624 (ELAK…VAAR) and 620–740 (TVAA…LSQK) each bind a nucleoside 3',5'-cyclic phosphate. The 167-residue stretch at 971-1137 (LVLGGGGARG…INNLPADIAR (167 aa)) folds into the PNPLA domain. The GXGXXG motif lies at 975 to 980 (GGGARG). The GXSXG signature appears at 1002–1006 (GTSIG). The active-site Nucleophile is Ser-1004. Catalysis depends on Asp-1124, which acts as the Proton acceptor. The DGA/G signature appears at 1124 to 1126 (DGG). Residues 1296–1365 (SYVSDGCADG…QEPPGSATDA (70 aa)) are disordered. Positions 1303-1319 (ADGEESDCLTEYEEDAG) are enriched in acidic residues.

This sequence belongs to the NTE family. Post-translationally, glycosylated.

It is found in the endoplasmic reticulum membrane. It carries out the reaction a 1-acyl-sn-glycero-3-phosphocholine + H2O = sn-glycerol 3-phosphocholine + a fatty acid + H(+). The catalysed reaction is 1-hexadecanoyl-sn-glycero-3-phosphocholine + H2O = sn-glycerol 3-phosphocholine + hexadecanoate + H(+). It catalyses the reaction 1-(9Z-octadecenoyl)-sn-glycero-3-phosphocholine + H2O = sn-glycerol 3-phosphocholine + (9Z)-octadecenoate + H(+). The enzyme catalyses 1-hexadecanoylglycerol + H2O = glycerol + hexadecanoate + H(+). It carries out the reaction 2-hexadecanoylglycerol + H2O = glycerol + hexadecanoate + H(+). The catalysed reaction is 1-(9Z-octadecenoyl)-glycerol + H2O = glycerol + (9Z)-octadecenoate + H(+). It catalyses the reaction 2-(9Z-octadecenoyl)-glycerol + H2O = glycerol + (9Z)-octadecenoate + H(+). The enzyme catalyses 2-(5Z,8Z,11Z,14Z-eicosatetraenoyl)-glycerol + H2O = glycerol + (5Z,8Z,11Z,14Z)-eicosatetraenoate + H(+). It carries out the reaction 1-hexadecanoyl-sn-glycero-3-phosphate + H2O = sn-glycerol 3-phosphate + hexadecanoate + H(+). Inhibited by a series a OPs such as mipafox (MPX), phenyl saligenin phosphate (PSP), phenyl dipentyl phosphinate (PDPP), diisopropyl fluorophosphate and paraoxon. Its function is as follows. Phospholipase B that deacylates intracellular phosphatidylcholine (PtdCho), generating glycerophosphocholine (GroPtdCho). This deacylation occurs at both sn-2 and sn-1 positions of PtdCho. Catalyzes the hydrolysis of several naturally occurring membrane-associated lipids. Hydrolyzes lysophospholipids and monoacylglycerols, preferring the 1-acyl to the 2-acyl isomer. Does not catalyze hydrolysis of di- or triacylglycerols or fatty acid amides. This is Patatin-like phospholipase domain-containing protein 6 (PNPLA6) from Pongo abelii (Sumatran orangutan).